A 288-amino-acid chain; its full sequence is Type II restriction enzyme DpnII (288 aa).

This sequence belongs to the DpnII type II restriction endonuclease family. In terms of assembly, homodimer.

The enzyme catalyses Endonucleolytic cleavage of DNA to give specific double-stranded fragments with terminal 5'-phosphates.. Its function is as follows. A P subtype restriction enzyme that recognizes the double-stranded unmethylated sequence 5'-GATC-3' and cleaves before G-1. This chain is Type II restriction enzyme DpnII, found in Streptococcus pneumoniae.